Here is a 439-residue protein sequence, read N- to C-terminus: Proline--tRNA ligase (439 aa).

The protein belongs to the class-II aminoacyl-tRNA synthetase family. ProS type 2 subfamily. As to quaternary structure, homodimer.

Its subcellular location is the cytoplasm. It carries out the reaction tRNA(Pro) + L-proline + ATP = L-prolyl-tRNA(Pro) + AMP + diphosphate. In terms of biological role, catalyzes the attachment of proline to tRNA(Pro) in a two-step reaction: proline is first activated by ATP to form Pro-AMP and then transferred to the acceptor end of tRNA(Pro). This Nitrobacter winogradskyi (strain ATCC 25391 / DSM 10237 / CIP 104748 / NCIMB 11846 / Nb-255) protein is Proline--tRNA ligase.